A 215-amino-acid polypeptide reads, in one-letter code: Cytochrome b6 (215 aa).

The chain crosses the membrane as a helical span at residues 32–52 (IFHCLGGITLTCFLVQVATGF). Cysteine 35 is a binding site for heme c. Residues histidine 86 and histidine 100 each contribute to the heme b site. Transmembrane regions (helical) follow at residues 90 to 110 (ASMM…TGGF), 116 to 136 (LTWV…VTGY), and 186 to 206 (LHTF…FPMI). The heme b site is built by histidine 187 and histidine 202.

It belongs to the cytochrome b family. PetB subfamily. The 4 large subunits of the cytochrome b6-f complex are cytochrome b6, subunit IV (17 kDa polypeptide, PetD), cytochrome f and the Rieske protein, while the 4 small subunits are PetG, PetL, PetM and PetN. The complex functions as a dimer. Heme b is required as a cofactor. It depends on heme c as a cofactor.

It localises to the plastid. Its subcellular location is the chloroplast thylakoid membrane. Component of the cytochrome b6-f complex, which mediates electron transfer between photosystem II (PSII) and photosystem I (PSI), cyclic electron flow around PSI, and state transitions. The polypeptide is Cytochrome b6 (Amborella trichopoda).